A 501-amino-acid chain; its full sequence is Cytochrome P450 7A1 (501 aa).

A helical transmembrane segment spans residues 4-24 (ISLLGGIVTAVCCCLWLLLGM). Cys441 is a heme binding site.

The protein belongs to the cytochrome P450 family. Heme is required as a cofactor.

It is found in the endoplasmic reticulum membrane. The protein localises to the microsome membrane. The catalysed reaction is cholesterol + reduced [NADPH--hemoprotein reductase] + O2 = 7alpha-hydroxycholesterol + oxidized [NADPH--hemoprotein reductase] + H2O + H(+). It carries out the reaction 4beta-hydroxycholesterol + reduced [NADPH--hemoprotein reductase] + O2 = 4beta,7alpha-dihydroxycholesterol + oxidized [NADPH--hemoprotein reductase] + H2O + H(+). The enzyme catalyses lathosterol + reduced [NADPH--hemoprotein reductase] + O2 = 7alpha,8alpha-epoxy-5alpha-cholestan-3beta-ol + oxidized [NADPH--hemoprotein reductase] + H2O + H(+). It catalyses the reaction lathosterol + reduced [NADPH--hemoprotein reductase] + O2 = 5alpha-cholestan-7-oxo-3beta-ol + oxidized [NADPH--hemoprotein reductase] + H2O + H(+). The catalysed reaction is 7-dehydrocholesterol + reduced [NADPH--hemoprotein reductase] + O2 = 7-oxocholesterol + oxidized [NADPH--hemoprotein reductase] + H2O + H(+). It carries out the reaction (24S)-hydroxycholesterol + reduced [NADPH--hemoprotein reductase] + O2 = (24S)-7alpha-dihydroxycholesterol + oxidized [NADPH--hemoprotein reductase] + H2O + H(+). The enzyme catalyses (24R)-hydroxycholesterol + reduced [NADPH--hemoprotein reductase] + O2 = (24R)-7alpha-dihydroxycholesterol + oxidized [NADPH--hemoprotein reductase] + H2O + H(+). The protein operates within lipid metabolism; bile acid biosynthesis. It functions in the pathway steroid metabolism; cholesterol degradation. Functionally, a cytochrome P450 monooxygenase involved in the metabolism of endogenous cholesterol and its oxygenated derivatives (oxysterols). Mechanistically, uses molecular oxygen inserting one oxygen atom into a substrate, and reducing the second into a water molecule, with two electrons provided by NADPH via cytochrome P450 reductase (CPR; NADPH-ferrihemoprotein reductase). Functions as a critical regulatory enzyme of bile acid biosynthesis and cholesterol homeostasis. Catalyzes the hydroxylation of carbon hydrogen bond at 7-alpha position of cholesterol, a rate-limiting step in cholesterol catabolism and bile acid biosynthesis. 7-alpha hydroxylates several oxysterols, including 4beta-hydroxycholesterol and 24-hydroxycholesterol. Catalyzes the oxidation of the 7,8 double bond of 7-dehydrocholesterol and lathosterol with direct and predominant formation of the 7-keto derivatives. The polypeptide is Cytochrome P450 7A1 (CYP7A1) (Sus scrofa (Pig)).